The sequence spans 346 residues: MSSSKSIDLKSKFLKVYDTLKSDLINDPAFEFDDDSRQWIQKMLDYNVPGGKLNRGLSVVDSYQLLKGGELSDDEIFLSSALGWCIEWLQAYFLVLDDIMDESHTRRGQPCWFRLPKVGMIAANDGILLRNHVPRILKKHFRGKPYYVDLVDLFNEVEFQTASGQMIDLITTLVGEKDLSKYSLSIHRRIVQYKTAYYSFYLPVACALLMFGEDLDKHVEVKNVLVEMGTYFQVQDDYLDCFGAPEVIGKIGTDIEDFKCSWLVVKALELANEEQKKTLHENYGKKDPASVAKVKEVYHTLNLQAVFEDYEATSYKKLITSIENHPSKAVQAVLKSFLGKIYKRQK.

Isopentenyl diphosphate is bound by residues Lys-52, Arg-55, and Gln-90. Mg(2+) is bound by residues Asp-97 and Asp-101. The DDXXD motif signature appears at 97–101; it reads DDIMD. Position 106 (Arg-106) interacts with dimethylallyl diphosphate. An isopentenyl diphosphate-binding site is contributed by Arg-107. Dimethylallyl diphosphate is bound by residues Lys-194, Thr-195, and Gln-233. The DDXXD motif signature appears at 236–240; the sequence is DDYLD. Residues Lys-250 and Lys-259 each coordinate dimethylallyl diphosphate.

This sequence belongs to the FPP/GGPP synthase family. It depends on Mg(2+) as a cofactor. Mn(2+) is required as a cofactor. As to expression, highly expressed in shoots.

It carries out the reaction isopentenyl diphosphate + (2E)-geranyl diphosphate = (2E,6E)-farnesyl diphosphate + diphosphate. The catalysed reaction is isopentenyl diphosphate + dimethylallyl diphosphate = (2E)-geranyl diphosphate + diphosphate. Its pathway is isoprenoid biosynthesis; farnesyl diphosphate biosynthesis; farnesyl diphosphate from geranyl diphosphate and isopentenyl diphosphate: step 1/1. It participates in isoprenoid biosynthesis; geranyl diphosphate biosynthesis; geranyl diphosphate from dimethylallyl diphosphate and isopentenyl diphosphate: step 1/1. Its function is as follows. Catalyzes the sequential condensation of isopentenyl pyrophosphate (IPP) with the allylic pyrophosphates, dimethylallyl pyrophosphate (DMAPP), and then with the resultant geranylpyrophosphate (GPP) to the ultimate product farnesyl pyrophosphate (FPP). Has a 4.5 time greater affinity for GPP versus DMAPP. This Artemisia spiciformis (Spiked big sagebrush) protein is Farnesyl diphosphate synthase 1 (FDS-1).